The chain runs to 226 residues: Spermatogenesis-associated protein 25 (226 aa).

A helical membrane pass occupies residues 153–173 (ICILTLAMMIAGIPTVPVPGL).

Belongs to the SPATA25 family. As to expression, expressed strongly in testis, weakly in epididymis and not detected in other tissues.

Its subcellular location is the membrane. Functionally, may play a role in spermatogenesis. This Mus musculus (Mouse) protein is Spermatogenesis-associated protein 25 (Spata25).